A 270-amino-acid polypeptide reads, in one-letter code: uncharacterized protein (270 aa).

Residues 1–37 (MATHTSKRRIHRWENNELSEENSTIIYFPARGLMWTH) are Cytoplasmic-facing. A helical transmembrane segment spans residues 38 to 58 (FPFVLGICLEFVGYVLKIVFI). The Extracellular segment spans residues 59–65 (NSPSIST). The chain crosses the membrane as a helical span at residues 66-86 (FIAQSVLLLIAPSLYALSIFM). The Cytoplasmic portion of the chain corresponds to 87–93 (LFSKMAR). The helical transmembrane segment at 94 to 114 (LILMEAYMLIPAKFSTVSFVV) threads the bilayer. Topologically, residues 115–140 (ADMIGRVLQAVGGGLLSSWNSRNTGR) are extracellular. Residues 141–161 (ILIIVGLFIQIFCYTFLTFSQ) traverse the membrane as a helical segment. The Cytoplasmic segment spans residues 162–181 (LFLHYKMKATPSKIVRDSNE). A helical transmembrane segment spans residues 182 to 202 (WFQYNFILLAGILLVNGRTIV). Residues 203–220 (RVVQFLMGLQSYIGQHEW) lie on the Extracellular side of the membrane. A helical transmembrane segment spans residues 221-241 (CLYVFDTVLMFLLPLIFLATF). Topologically, residues 242 to 270 (RARNLFKLQDKSVNIQLNKLLDKESVSED) are cytoplasmic.

This sequence belongs to the lipid-translocating exporter (LTE) (TC 9.A.26.1) family.

It localises to the membrane. This is an uncharacterized protein from Saccharomyces cerevisiae (strain ATCC 204508 / S288c) (Baker's yeast).